The chain runs to 226 residues: ATP-dependent dethiobiotin synthetase BioD (226 aa).

Residue 14–19 (GIGKTF) participates in ATP binding. T18 provides a ligand contact to Mg(2+). The active site involves K39. S43 is a binding site for substrate. ATP contacts are provided by residues D56, 117 to 120 (EGVG), 177 to 178 (NT), 206 to 208 (PHI), and N213. Mg(2+) is bound by residues D56 and E117.

This sequence belongs to the dethiobiotin synthetase family. In terms of assembly, homodimer. Requires Mg(2+) as cofactor.

The protein resides in the cytoplasm. It carries out the reaction (7R,8S)-7,8-diammoniononanoate + CO2 + ATP = (4R,5S)-dethiobiotin + ADP + phosphate + 3 H(+). It functions in the pathway cofactor biosynthesis; biotin biosynthesis; biotin from 7,8-diaminononanoate: step 1/2. Catalyzes a mechanistically unusual reaction, the ATP-dependent insertion of CO2 between the N7 and N8 nitrogen atoms of 7,8-diaminopelargonic acid (DAPA, also called 7,8-diammoniononanoate) to form a ureido ring. The polypeptide is ATP-dependent dethiobiotin synthetase BioD (Xylella fastidiosa (strain 9a5c)).